A 364-amino-acid polypeptide reads, in one-letter code: Arabinose metabolism transcriptional repressor (364 aa).

Positions 6–74 constitute an HTH gntR-type domain; sequence LPKYLQLKQE…QGSGTFVSRP (69 aa). The H-T-H motif DNA-binding region spans 34–53; sequence EHEIANQFQLSRHTVRQALG.

Its subcellular location is the cytoplasm. Transcriptional repressor of the arabinose utilization genes. The chain is Arabinose metabolism transcriptional repressor (araR) from Geobacillus stearothermophilus (Bacillus stearothermophilus).